We begin with the raw amino-acid sequence, 393 residues long: Protein phosphatase 2C homolog 4 (393 aa).

Residues Tyr33–Leu368 enclose the PPM-type phosphatase domain. Positions 83, 84, 310, and 359 each coordinate Mn(2+).

This sequence belongs to the PP2C family. Requires Mg(2+) as cofactor. Mn(2+) is required as a cofactor.

The catalysed reaction is O-phospho-L-seryl-[protein] + H2O = L-seryl-[protein] + phosphate. It catalyses the reaction O-phospho-L-threonyl-[protein] + H2O = L-threonyl-[protein] + phosphate. In Saccharomyces cerevisiae (strain ATCC 204508 / S288c) (Baker's yeast), this protein is Protein phosphatase 2C homolog 4 (PTC4).